Reading from the N-terminus, the 36-residue chain is Tddefensin (36 aa).

3 cysteine pairs are disulfide-bonded: cysteine 3-cysteine 24, cysteine 10-cysteine 32, and cysteine 14-cysteine 34.

Belongs to the invertebrate defensin family. Expressed by the venom gland.

The protein localises to the secreted. In terms of biological role, antibacterial peptide mostly active against Gram-positive bacteria. In Tityus discrepans (Venezuelan scorpion), this protein is Tddefensin.